Consider the following 392-residue polypeptide: Probable myosin light chain kinase DDB_G0271550 (392 aa).

In terms of domain architecture, Protein kinase spans 20–278 (YEFGPEIGRG…ASQCIKHPWL (259 aa)). ATP contacts are provided by residues 26 to 34 (IGRGAFSIV) and Lys49. Asp142 serves as the catalytic Proton acceptor. Positions 317–326 (SQSTPNLHSA) are enriched in polar residues. The segment at 317–392 (SQSTPNLHSA…NNNNNNNNNI (76 aa)) is disordered. The segment covering 327 to 392 (NSNTNTNSLS…NNNNNNNNNI (66 aa)) has biased composition (low complexity).

This sequence belongs to the protein kinase superfamily. CAMK Ser/Thr protein kinase family. CaMK subfamily.

The catalysed reaction is L-seryl-[myosin light chain] + ATP = O-phospho-L-seryl-[myosin light chain] + ADP + H(+). It carries out the reaction L-threonyl-[myosin light chain] + ATP = O-phospho-L-threonyl-[myosin light chain] + ADP + H(+). May phosphorylate a specific serine in the N-terminus of a myosin light chain. This chain is Probable myosin light chain kinase DDB_G0271550, found in Dictyostelium discoideum (Social amoeba).